A 373-amino-acid chain; its full sequence is Transcription factor NF-E2 45 kDa subunit (373 aa).

Disordered stretches follow at residues 1-22 and 40-60; these read MPPC…GELG and LNVP…PGPL. Residues 1 to 83 form a required for interaction with MAPK8 region; the sequence is MPPCPPQPNR…AGFTLPPPPY (83 aa). Positions 1–206 are transactivation domain; the sequence is MPPCPPQPNR…PPTETPLVLE (206 aa). 2 consecutive short sequence motifs (PXY motif) follow at residues 61-65 and 79-83; these read PPPTY and PPPPY. Residues 131–163 are disordered; the sequence is LPVGQPKPQEDPESDSGLSLNYSDAESLELEGT. Ser157 is subject to Phosphoserine; by MAPK8. Ser170 is subject to Phosphoserine; by PKA. The interval 206-225 is disordered; sequence ESSSGPVRAKPAVRGEAGSR. Positions 266–329 constitute a bZIP domain; sequence LVRDIRRRGK…EVMRQQLTEL (64 aa). Residues 268–287 form a basic motif region; sequence RDIRRRGKNKVAAQNCRKRK. The tract at residues 291–298 is leucine-zipper; that stretch reads IVQLEREL. Lys368 participates in a covalent cross-link: Glycyl lysine isopeptide (Lys-Gly) (interchain with G-Cter in SUMO); alternate. Lys368 is covalently cross-linked (Glycyl lysine isopeptide (Lys-Gly) (interchain with G-Cter in SUMO1); alternate).

The protein belongs to the bZIP family. CNC subfamily. Homodimer; can bind DNA as a homodimer. Erythroid transcription activator nuclear factor erythroid-derived 2 (NF-E2), composed of a heterodimer of NFE2 and MAFK, possesses transactivation activity on beta-globin. Also forms high affinity heterodimer with MAFG; the interaction promotes erythropoiesis. Interacts (via the PXY motif 1) with ITCH (via the WW 1 domain); the interaction promotes 'Lys63'-linked ubiquitination of NFE2, translocates it to the cytoplasm and inhibits its transactivation activity. Interacts with KMT2D/MLL2; the interaction promotes transactivation of the beta-globin locus. Interacts with MAPK8 (phosphorylated form); the interaction leads to phosphorylation of NFE2 in undifferentiated cells. Post-translationally, phosphorylated on serine residues. In undifferentiated erythrocytes, phosphorylated by MAPK8 which then leads to ubiquitination and protein degradation. Sumoylated. Sumoylation is required for translocation to nuclear bodies PODs, anchoring to the gene loci, and transactivation of the beta-globin gene. In terms of processing, ubiquitinated mainly by 'Lys63'-linked ubiquitin. Polyubiquitination with 'Lys63'-linked ubiquitin by ITCH retains NFE2 in the cytoplasm preventing its transactivation activity. In undifferentiated erythrocyte, ubiquitinated after MAPK8-mediatd phosphorylation leading to protein degradation.

It localises to the nucleus. The protein resides in the PML body. The protein localises to the cytoplasm. Functionally, component of the NF-E2 complex essential for regulating erythroid and megakaryocytic maturation and differentiation. Binds to the hypersensitive site 2 (HS2) of the beta-globin control region (LCR). This subunit (NFE2) recognizes the TCAT/C sequence of the AP-1-like core palindrome present in a number of erythroid and megakaryocytic gene promoters. Requires MAFK or other small MAF proteins for binding to the NF-E2 motif. May play a role in all aspects of hemoglobin production from globin and heme synthesis to procurement of iron. The protein is Transcription factor NF-E2 45 kDa subunit (Nfe2) of Rattus norvegicus (Rat).